Consider the following 225-residue polypeptide: U2 small nuclear ribonucleoprotein B'' (225 aa).

In terms of domain architecture, RRM 1 spans 7-86 (HTIYINNMND…KPMRIQYAKT (80 aa)). A disordered region spans residues 100–144 (DKEKKKEKKKAKTMEQAAAAANKKPGQGTPNAANTQGTAAPNPQV). At K111 the chain carries N6-acetyllysine; alternate. K111 participates in a covalent cross-link: Glycyl lysine isopeptide (Lys-Gly) (interchain with G-Cter in SUMO2); alternate. Residues 113-123 (MEQAAAAANKK) show a composition bias toward low complexity. A compositionally biased stretch (polar residues) spans 127–140 (GTPNAANTQGTAAP). Y151 carries the post-translational modification Phosphotyrosine. The 75-residue stretch at 151 to 225 (YILFLNNLPE…HAMKITYAKK (75 aa)) folds into the RRM 2 domain.

This sequence belongs to the RRM U1 A/B'' family. Identified in the spliceosome B complex. Identified in the spliceosome C complex. Present in a spliceosome complex assembled in vitro, and composed of SNRPB2, HPRP8BP and CRNKL1. Contributes to the binding of stem loop IV of U2 snRNA with SNRPP1.

The protein localises to the nucleus. Its function is as follows. Involved in pre-mRNA splicing as component of the spliceosome. Associated with sn-RNP U2, where it contributes to the binding of stem loop IV of U2 snRNA. This chain is U2 small nuclear ribonucleoprotein B'' (Snrpb2), found in Mus musculus (Mouse).